Here is a 321-residue protein sequence, read N- to C-terminus: Ribosomal RNA small subunit methyltransferase H (321 aa).

S-adenosyl-L-methionine is bound by residues 40–42 (GGH), D60, F84, D106, and Q113.

Belongs to the methyltransferase superfamily. RsmH family.

Its subcellular location is the cytoplasm. The catalysed reaction is cytidine(1402) in 16S rRNA + S-adenosyl-L-methionine = N(4)-methylcytidine(1402) in 16S rRNA + S-adenosyl-L-homocysteine + H(+). Its function is as follows. Specifically methylates the N4 position of cytidine in position 1402 (C1402) of 16S rRNA. This is Ribosomal RNA small subunit methyltransferase H from Histophilus somni (strain 2336) (Haemophilus somnus).